The primary structure comprises 385 residues: D-alanyl-D-alanine-carboxypeptidase/endopeptidase AmpH (385 aa).

The N-terminal stretch at 1–21 (MKRSLLFSAVLCAASLTSVHA) is a signal peptide.

This sequence belongs to the beta-lactamase family.

It is found in the cell inner membrane. With respect to regulation, inhibited by cefmetazole. Functionally, hydrolyzes the cross-linked dimers tetrapentapeptide (D45) and tetratetrapeptide (D44). Removes the terminal D-alanine from muropeptides and disaccharide pentapeptide M5 with a C-terminal D-Ala-D-Ala dipeptide. Associated with recycling and remodeling of peptidoglycan (PG). This Escherichia coli O157:H7 protein is D-alanyl-D-alanine-carboxypeptidase/endopeptidase AmpH (ampH).